We begin with the raw amino-acid sequence, 237 residues long: MPTLVLLRHGQSQWNLENRFTGWVDVDLTAEGEAQARKGGELIAAAGIEIDRLFTSVQTRAIRTGNLALDAAKQSFVPVTKDWRLNERHYGGLTGLNKAETAEKHGVEQVTIWRRSYDIPPPELAPGGEYDFSKDRRYKGASLPSTESLATTLVRVLPYWESDIAPHLKAGETVLIAAHGNSLRAIVKHLFNVPDDQIVGVEIPTGNPLVIDLDAALKPTGARYLDDSRAEALPKVG.

Substrate contacts are provided by residues 8–15, 21–22, Arg60, 87–90, Lys98, 114–115, and 180–181; these read RHGQSQWN, TG, ERHY, RR, and GN. Residue His9 is the Tele-phosphohistidine intermediate of the active site. The active-site Proton donor/acceptor is the Glu87.

The protein belongs to the phosphoglycerate mutase family. BPG-dependent PGAM subfamily. As to quaternary structure, homodimer.

It catalyses the reaction (2R)-2-phosphoglycerate = (2R)-3-phosphoglycerate. Its pathway is carbohydrate degradation; glycolysis; pyruvate from D-glyceraldehyde 3-phosphate: step 3/5. In terms of biological role, catalyzes the interconversion of 2-phosphoglycerate and 3-phosphoglycerate. This Caulobacter vibrioides (strain ATCC 19089 / CIP 103742 / CB 15) (Caulobacter crescentus) protein is 2,3-bisphosphoglycerate-dependent phosphoglycerate mutase.